The sequence spans 200 residues: DNA-directed RNA polymerase subunit 7-like protein (200 aa).

This sequence belongs to the eukaryotic RPB7/RPC8 RNA polymerase subunit family.

Its subcellular location is the nucleus. The chain is DNA-directed RNA polymerase subunit 7-like protein (NRPB7L) from Arabidopsis thaliana (Mouse-ear cress).